We begin with the raw amino-acid sequence, 209 residues long: Large ribosomal subunit protein uL3 (209 aa).

N5-methylglutamine is present on Gln-150.

It belongs to the universal ribosomal protein uL3 family. In terms of assembly, part of the 50S ribosomal subunit. Forms a cluster with proteins L14 and L19. In terms of processing, methylated by PrmB.

One of the primary rRNA binding proteins, it binds directly near the 3'-end of the 23S rRNA, where it nucleates assembly of the 50S subunit. The sequence is that of Large ribosomal subunit protein uL3 from Ectopseudomonas mendocina (strain ymp) (Pseudomonas mendocina).